A 635-amino-acid polypeptide reads, in one-letter code: Threonine--tRNA ligase (635 aa).

The TGS domain maps to 1–61 (MVSIRLPDGS…DRDASLAIVT (61 aa)). The segment at 242-533 (DHRKLGKQLD…LIEHHAGAMP (292 aa)) is catalytic. Zn(2+) is bound by residues Cys333, His384, and His510.

The protein belongs to the class-II aminoacyl-tRNA synthetase family. In terms of assembly, homodimer. Zn(2+) is required as a cofactor.

It is found in the cytoplasm. It catalyses the reaction tRNA(Thr) + L-threonine + ATP = L-threonyl-tRNA(Thr) + AMP + diphosphate + H(+). Its function is as follows. Catalyzes the attachment of threonine to tRNA(Thr) in a two-step reaction: L-threonine is first activated by ATP to form Thr-AMP and then transferred to the acceptor end of tRNA(Thr). Also edits incorrectly charged L-seryl-tRNA(Thr). The sequence is that of Threonine--tRNA ligase from Burkholderia pseudomallei (strain 1106a).